A 232-amino-acid chain; its full sequence is 2-C-methyl-D-erythritol 4-phosphate cytidylyltransferase (232 aa).

It belongs to the IspD/TarI cytidylyltransferase family. IspD subfamily.

It carries out the reaction 2-C-methyl-D-erythritol 4-phosphate + CTP + H(+) = 4-CDP-2-C-methyl-D-erythritol + diphosphate. The protein operates within isoprenoid biosynthesis; isopentenyl diphosphate biosynthesis via DXP pathway; isopentenyl diphosphate from 1-deoxy-D-xylulose 5-phosphate: step 2/6. Catalyzes the formation of 4-diphosphocytidyl-2-C-methyl-D-erythritol from CTP and 2-C-methyl-D-erythritol 4-phosphate (MEP). The polypeptide is 2-C-methyl-D-erythritol 4-phosphate cytidylyltransferase (Rhodococcus erythropolis (strain PR4 / NBRC 100887)).